The following is a 153-amino-acid chain: Protein SprT-like (153 aa).

One can recognise a SprT-like domain in the interval 6 to 148 (LQQLTEQLSL…CGKCGGKIKE (143 aa)). His67 contributes to the Zn(2+) binding site. Residue Glu68 is part of the active site. Residue His71 participates in Zn(2+) binding.

It belongs to the SprT family. The cofactor is Zn(2+).

Its subcellular location is the cytoplasm. This chain is Protein SprT-like, found in Bacillus licheniformis (strain ATCC 14580 / DSM 13 / JCM 2505 / CCUG 7422 / NBRC 12200 / NCIMB 9375 / NCTC 10341 / NRRL NRS-1264 / Gibson 46).